The sequence spans 196 residues: MSEAITPTAMKTLFTEARTHNGWQEMPVSDETLREIYDLMKWGPTSANCSPARIVFVRTPEGKEKLRPSLSSGNLAKTLAAPVTAIIAWDSEFYERLPELFPHGDARSWFTSSPALAEETAFRNSAMQAAYLIFACRALGLDTGPMSGFDRQKVDEAFFTGTTLKSNLLINIGYGDFSKVYGRLPRLSFEDACGLV.

It belongs to the nitroreductase family. HadB/RutE subfamily. The cofactor is FMN.

The catalysed reaction is 3-hydroxypropanoate + NADP(+) = 3-oxopropanoate + NADPH + H(+). Functionally, may reduce toxic product malonic semialdehyde to 3-hydroxypropionic acid, which is excreted. This is Probable malonic semialdehyde reductase RutE from Enterobacter sp. (strain 638).